The primary structure comprises 81 residues: Large ribosomal subunit protein bL27 (81 aa).

The disordered stretch occupies residues 1–22 (MAHKKGQGSSRNGRDSNAQRRG).

This sequence belongs to the bacterial ribosomal protein bL27 family.

This Rhodopirellula baltica (strain DSM 10527 / NCIMB 13988 / SH1) protein is Large ribosomal subunit protein bL27.